We begin with the raw amino-acid sequence, 475 residues long: Ribulose bisphosphate carboxylase large chain (475 aa).

A propeptide spanning residues 1–2 (MS) is cleaved from the precursor. An N-acetylproline modification is found at Pro-3. Residue Lys-14 is modified to N6,N6,N6-trimethyllysine. The substrate site is built by Asn-123 and Thr-173. The active-site Proton acceptor is Lys-175. Lys-177 lines the substrate pocket. Mg(2+) contacts are provided by Lys-201, Asp-203, and Glu-204. Lys-201 is subject to N6-carboxylysine. His-294 (proton acceptor) is an active-site residue. 3 residues coordinate substrate: Arg-295, His-327, and Ser-379.

Belongs to the RuBisCO large chain family. Type I subfamily. As to quaternary structure, heterohexadecamer of 8 large chains and 8 small chains; disulfide-linked. The disulfide link is formed within the large subunit homodimers. The cofactor is Mg(2+). In terms of processing, the disulfide bond which can form in the large chain dimeric partners within the hexadecamer appears to be associated with oxidative stress and protein turnover.

It localises to the plastid. It is found in the chloroplast. The catalysed reaction is 2 (2R)-3-phosphoglycerate + 2 H(+) = D-ribulose 1,5-bisphosphate + CO2 + H2O. It catalyses the reaction D-ribulose 1,5-bisphosphate + O2 = 2-phosphoglycolate + (2R)-3-phosphoglycerate + 2 H(+). Its function is as follows. RuBisCO catalyzes two reactions: the carboxylation of D-ribulose 1,5-bisphosphate, the primary event in carbon dioxide fixation, as well as the oxidative fragmentation of the pentose substrate in the photorespiration process. Both reactions occur simultaneously and in competition at the same active site. This Buxus microphylla (Littleleaf boxwood) protein is Ribulose bisphosphate carboxylase large chain.